Consider the following 148-residue polypeptide: Lysozyme C (148 aa).

The N-terminal stretch at 1–18 is a signal peptide; it reads MKALIVLGLVLLSVTVQG. In terms of domain architecture, C-type lysozyme spans 19 to 148; it reads KVFERCELAR…VRQYVQGCGV (130 aa). 4 disulfides stabilise this stretch: cysteine 24–cysteine 146, cysteine 48–cysteine 134, cysteine 83–cysteine 99, and cysteine 95–cysteine 113. Residues glutamate 53 and aspartate 71 contribute to the active site.

This sequence belongs to the glycosyl hydrolase 22 family. Monomer.

Its subcellular location is the secreted. It catalyses the reaction Hydrolysis of (1-&gt;4)-beta-linkages between N-acetylmuramic acid and N-acetyl-D-glucosamine residues in a peptidoglycan and between N-acetyl-D-glucosamine residues in chitodextrins.. In terms of biological role, lysozymes have primarily a bacteriolytic function; those in tissues and body fluids are associated with the monocyte-macrophage system and enhance the activity of immunoagents. In Homo sapiens (Human), this protein is Lysozyme C (LYZ).